The primary structure comprises 296 residues: Glycine N-acyltransferase (296 aa).

N6-acetyllysine; alternate is present on residues lysine 16, lysine 127, and lysine 141. An N6-succinyllysine; alternate mark is found at lysine 16, lysine 127, and lysine 141. Position 159 is an N6-acetyllysine (lysine 159). Lysine 169 is modified (N6-succinyllysine). 2 positions are modified to N6-acetyllysine; alternate: lysine 183 and lysine 256. N6-succinyllysine; alternate occurs at positions 183 and 256.

The protein belongs to the glycine N-acyltransferase family. Predominantly expressed in liver (at protein level) and kidney. Down-regulated in hepatocellular carcinoma and other liver cancers.

Its subcellular location is the mitochondrion. The catalysed reaction is an acyl-CoA + glycine = an N-acylglycine + CoA + H(+). It catalyses the reaction benzoyl-CoA + glycine = N-benzoylglycine + CoA + H(+). Functionally, mitochondrial acyltransferase which transfers an acyl group to the N-terminus of glycine and glutamine, although much less efficiently. Can conjugate numerous substrates to form a variety of N-acylglycines, with a preference for benzoyl-CoA over phenylacetyl-CoA as acyl donors. Thereby detoxify xenobiotics, such as benzoic acid or salicylic acid, and endogenous organic acids, such as isovaleric acid. This is Glycine N-acyltransferase (GLYAT) from Homo sapiens (Human).